A 100-amino-acid polypeptide reads, in one-letter code: Co-chaperonin GroES (100 aa).

It belongs to the GroES chaperonin family. Heptamer of 7 subunits arranged in a ring. Interacts with the chaperonin GroEL.

It is found in the cytoplasm. Together with the chaperonin GroEL, plays an essential role in assisting protein folding. The GroEL-GroES system forms a nano-cage that allows encapsulation of the non-native substrate proteins and provides a physical environment optimized to promote and accelerate protein folding. GroES binds to the apical surface of the GroEL ring, thereby capping the opening of the GroEL channel. The protein is Co-chaperonin GroES of Mycolicibacterium smegmatis (strain ATCC 700084 / mc(2)155) (Mycobacterium smegmatis).